A 264-amino-acid chain; its full sequence is MEISHVIVLALVQGISEFLPISSSAHLILVPKLLGWPDQGLAFDVAVHVGTLSAILFYFKDTIFKLLRDFFASIAQRKMVGDSLLVWCVGFATIPVGIFGLLFNNVIEEYARSGVVIAVTTIIFGIALYFADLRSTNKSEYEMTIKFALIIGLAQAVALIPGVSRSGITMTAALFLGFSHKGSANFSFLLSIPVIILAGGLESIKLIKDPNALPWSDIALGVIISAVSAYICVKLFMGIISRIRMLPFVIYRLILGAFLLYLFL.

8 consecutive transmembrane segments (helical) span residues 1–21 (MEIS…FLPI), 39–59 (QGLA…LFYF), 83–103 (SLLV…GLLF), 113–133 (SGVV…FADL), 143–163 (MTIK…IPGV), 184–204 (ANFS…LESI), 220–240 (LGVI…MGII), and 243–263 (IRML…LYLF).

Belongs to the UppP family.

Its subcellular location is the cell inner membrane. It carries out the reaction di-trans,octa-cis-undecaprenyl diphosphate + H2O = di-trans,octa-cis-undecaprenyl phosphate + phosphate + H(+). In terms of biological role, catalyzes the dephosphorylation of undecaprenyl diphosphate (UPP). Confers resistance to bacitracin. This Campylobacter concisus (strain 13826) protein is Undecaprenyl-diphosphatase.